A 115-amino-acid chain; its full sequence is Large ribosomal subunit protein bL19 (115 aa).

The protein belongs to the bacterial ribosomal protein bL19 family.

Functionally, this protein is located at the 30S-50S ribosomal subunit interface and may play a role in the structure and function of the aminoacyl-tRNA binding site. This chain is Large ribosomal subunit protein bL19, found in Francisella tularensis subsp. holarctica (strain FTNF002-00 / FTA).